Consider the following 2235-residue polypeptide: Bridge-like lipid transfer protein family member 2 (2235 aa).

Positions 1–31 are cleaved as a signal peptide; the sequence is MPLFFSALLVLLLVALSALFLGRWLVVRLAT. The transmembrane domain stretch occupies residues 29–108; that stretch reads LATKWCQRKL…LQKVSDLSAP (80 aa). Residue serine 563 is modified to Phosphoserine. N-linked (GlcNAc...) asparagine glycosylation is present at asparagine 730. The interval 1495–1529 is disordered; sequence PQMPAKKPKRGVPTSASAPPRVNTPSFSGQPDKGS. Residues 1813 to 1885 are a coiled coil; that stretch reads SILHLQEAVR…LNILIRCFKD (73 aa). Phosphoserine is present on residues serine 1846, serine 2090, and serine 2094. The segment at 2074–2099 is disordered; that stretch reads GKGVAQGLTRSSGVRRSFRKSPEHPV.

This sequence belongs to the SABRE family. As to expression, expressed in pancreas, placenta and up-regulated in breast carcinoma epithelial cells, ductal in situ carcinoma (DCIS), invasive breast carcinoma (IBC) and metastatic breast carcinoma cells (MET).

It localises to the cell membrane. The protein localises to the endoplasmic reticulum membrane. Its subcellular location is the mitochondrion membrane. Tube-forming lipid transport protein which binds to phosphatidylinositols and affects phosphatidylinositol-4,5-bisphosphate (PtdIns-4,5-P2) distribution. In Homo sapiens (Human), this protein is Bridge-like lipid transfer protein family member 2.